The sequence spans 201 residues: 3-isopropylmalate dehydratase small subunit (201 aa).

Belongs to the LeuD family. LeuD type 1 subfamily. In terms of assembly, heterodimer of LeuC and LeuD.

It catalyses the reaction (2R,3S)-3-isopropylmalate = (2S)-2-isopropylmalate. The protein operates within amino-acid biosynthesis; L-leucine biosynthesis; L-leucine from 3-methyl-2-oxobutanoate: step 2/4. In terms of biological role, catalyzes the isomerization between 2-isopropylmalate and 3-isopropylmalate, via the formation of 2-isopropylmaleate. The polypeptide is 3-isopropylmalate dehydratase small subunit (Micrococcus luteus (strain ATCC 4698 / DSM 20030 / JCM 1464 / CCM 169 / CCUG 5858 / IAM 1056 / NBRC 3333 / NCIMB 9278 / NCTC 2665 / VKM Ac-2230) (Micrococcus lysodeikticus)).